Consider the following 264-residue polypeptide: Teichoic acids export ATP-binding protein TagH (264 aa).

The ABC transporter domain maps to 22–243 (ERLKDVIVPF…YEKFLNDFKK (222 aa)). 57-64 (GINGSGKS) is a binding site for ATP.

Belongs to the ABC transporter superfamily. Teichoic acids exporter (TC 3.A.1.104.1) family. As to quaternary structure, the complex is composed of two ATP-binding proteins (TagH) and two transmembrane proteins (TagG).

It is found in the cell membrane. The catalysed reaction is ATP + H2O + teichoic acidSide 1 = ADP + phosphate + teichoic acidSide 2.. Part of the ABC transporter complex TagGH involved in teichoic acids export. Responsible for energy coupling to the transport system. The protein is Teichoic acids export ATP-binding protein TagH of Staphylococcus saprophyticus subsp. saprophyticus (strain ATCC 15305 / DSM 20229 / NCIMB 8711 / NCTC 7292 / S-41).